The following is a 124-amino-acid chain: Seripauperin-17 (124 aa).

Residues 1–20 (MVKLTSIAAGVAAIAAGVAA) form the signal peptide.

Belongs to the SRP1/TIP1 family. Seripauperin subfamily.

The protein is Seripauperin-17 (PAU17) of Saccharomyces cerevisiae (strain ATCC 204508 / S288c) (Baker's yeast).